Reading from the N-terminus, the 192-residue chain is Beta-glucosidase (192 aa).

Belongs to the glycosyl hydrolase 3 family.

The catalysed reaction is Hydrolysis of terminal, non-reducing beta-D-glucosyl residues with release of beta-D-glucose.. It participates in glycan metabolism; cellulose degradation. In Schizophyllum commune (Split gill fungus), this protein is Beta-glucosidase.